Here is a 424-residue protein sequence, read N- to C-terminus: Chitinase CLP (424 aa).

A signal peptide spans 1-18 (MSLHLLLAVSLCVALASS). The Peptidase A1 domain maps to 43-405 (AATSLYTVPI…DEEKQRLGFS (363 aa)). N-linked (GlcNAc...) asparagine glycosylation is found at Asn-139, Asn-345, and Asn-419.

The protein belongs to the peptidase A1 family. In terms of tissue distribution, expressed in roots. Expressed at low levels in leaf sheaths, stems and flowers.

Its subcellular location is the secreted. The protein resides in the extracellular space. The protein localises to the apoplast. It carries out the reaction Random endo-hydrolysis of N-acetyl-beta-D-glucosaminide (1-&gt;4)-beta-linkages in chitin and chitodextrins.. Its function is as follows. Chitinase that possesses antifungal activity. Inhibits the growth of the fungal pathogen Rhizoctonia solani by degrading the fungal cell wall. Does not possess inhibiting activity against fungal endo-1,4-beta-D-xylanases belonging to glycoside hydrolase family 10 (GH10) and family 11 (GH11). Involved in the regulation of plant growth by regulating the intracellular calcium ion concentration in roots. In Oryza sativa subsp. japonica (Rice), this protein is Chitinase CLP.